Here is a 292-residue protein sequence, read N- to C-terminus: Elongation factor Ts (292 aa).

The segment at 79–82 (TDFV) is involved in Mg(2+) ion dislocation from EF-Tu.

Belongs to the EF-Ts family.

The protein resides in the cytoplasm. Functionally, associates with the EF-Tu.GDP complex and induces the exchange of GDP to GTP. It remains bound to the aminoacyl-tRNA.EF-Tu.GTP complex up to the GTP hydrolysis stage on the ribosome. The protein is Elongation factor Ts of Staphylococcus haemolyticus (strain JCSC1435).